Here is a 905-residue protein sequence, read N- to C-terminus: A disintegrin and metalloproteinase with thrombospondin motifs 8 (905 aa).

The N-terminal stretch at 1–28 (MLRDPTTTGWPPLLLLLLQLPPPPLVCG) is a signal peptide. The propeptide occupies 29–228 (APAGPGTGAQ…PFGSKTRSKR (200 aa)). 2 disordered regions span residues 139-163 (PQGA…RRED) and 186-225 (NGQG…SKTR). Residues 191–215 (ERSDNEEDRKQDKEGLLKETEDSRK) are compositionally biased toward basic and acidic residues. A Peptidase M12B domain is found at 234-444 (RFVETLLVAD…GHGDCLLDAP (211 aa)). 10 cysteine pairs are disulfide-bonded: Cys-309–Cys-362, Cys-338–Cys-344, Cys-356–Cys-439, Cys-394–Cys-423, Cys-478–Cys-502, Cys-487–Cys-523, Cys-517–Cys-528, Cys-554–Cys-591, Cys-558–Cys-596, and Cys-569–Cys-581. A Zn(2+)-binding site is contributed by His-378. The active site involves Glu-379. The Zn(2+) site is built by His-382 and His-388. N-linked (GlcNAc...) asparagine glycans are attached at residues Asn-415, Asn-480, and Asn-506. Residues 453-541 (GLPGHSTLYE…EDVENPKAVV (89 aa)) enclose the Disintegrin domain. One can recognise a TSP type-1 1 domain in the interval 542-597 (DGDWGPWRPWGQCSRTCGGGIQFSNRECDNPMPQNGGRFCLGERVKYQSCNTEECP). Asn-615 carries an N-linked (GlcNAc...) asparagine glycan. Residues 706-847 (RKISGSFTPF…RATTNIIQSL (142 aa)) are spacer. Residues 848–904 (PSAEWVLGDWSECPSTCRGSWQRRTVECRDPSGQASDTCDEALKPEDAKPCGSQPCP) enclose the TSP type-1 2 domain. The tract at residues 877-905 (DPSGQASDTCDEALKPEDAKPCGSQPCPL) is disordered.

Requires Zn(2+) as cofactor. The precursor is cleaved by a furin endopeptidase. In terms of processing, glycosylated. Can be O-fucosylated by POFUT2 on a serine or a threonine residue found within the consensus sequence C1-X(2)-(S/T)-C2-G of the TSP type-1 repeat domains where C1 and C2 are the first and second cysteine residue of the repeat, respectively. Fucosylated repeats can then be further glycosylated by the addition of a beta-1,3-glucose residue by the glucosyltransferase, B3GALTL. Fucosylation mediates the efficient secretion of ADAMTS family members. Can also be C-glycosylated with one or two mannose molecules on tryptophan residues within the consensus sequence W-X-X-W of the TPRs, and N-glycosylated. These other glycosylations can also facilitate secretion. In terms of tissue distribution, expressed specifically in adult lung and heart and low expression during mouse development.

It localises to the secreted. The protein localises to the extracellular space. The protein resides in the extracellular matrix. Its function is as follows. Has anti-angiogenic properties. The protein is A disintegrin and metalloproteinase with thrombospondin motifs 8 (Adamts8) of Mus musculus (Mouse).